Here is a 131-residue protein sequence, read N- to C-terminus: D-ribose pyranase (131 aa).

Catalysis depends on His20, which acts as the Proton donor. Residues Asp28, His98, and 120–122 (FSN) each bind substrate.

The protein belongs to the RbsD / FucU family. RbsD subfamily. In terms of assembly, homodecamer.

It localises to the cytoplasm. It carries out the reaction beta-D-ribopyranose = beta-D-ribofuranose. It participates in carbohydrate metabolism; D-ribose degradation; D-ribose 5-phosphate from beta-D-ribopyranose: step 1/2. Catalyzes the interconversion of beta-pyran and beta-furan forms of D-ribose. The polypeptide is D-ribose pyranase (Lactobacillus acidophilus (strain ATCC 700396 / NCK56 / N2 / NCFM)).